The following is a 448-amino-acid chain: Methylenetetrahydrofolate--tRNA-(uracil-5-)-methyltransferase TrmFO (448 aa).

Residue 13–18 (GAGLAG) participates in FAD binding.

Belongs to the MnmG family. TrmFO subfamily. FAD serves as cofactor.

It localises to the cytoplasm. The catalysed reaction is uridine(54) in tRNA + (6R)-5,10-methylene-5,6,7,8-tetrahydrofolate + NADH + H(+) = 5-methyluridine(54) in tRNA + (6S)-5,6,7,8-tetrahydrofolate + NAD(+). The enzyme catalyses uridine(54) in tRNA + (6R)-5,10-methylene-5,6,7,8-tetrahydrofolate + NADPH + H(+) = 5-methyluridine(54) in tRNA + (6S)-5,6,7,8-tetrahydrofolate + NADP(+). Catalyzes the folate-dependent formation of 5-methyl-uridine at position 54 (M-5-U54) in all tRNAs. This Streptococcus pyogenes serotype M18 (strain MGAS8232) protein is Methylenetetrahydrofolate--tRNA-(uracil-5-)-methyltransferase TrmFO.